Here is a 383-residue protein sequence, read N- to C-terminus: Putative type I specificity subunit S.MgeORF438P (383 aa).

Residues 1 to 142 form a TRD1 region; sequence MTPKLKLNNN…KELEIPFTSN (142 aa). Residues 143 to 182 are conserved region 1; that stretch reads KNEQHAIANTLSVFDERLENLASLIEINRKLRDEYAHKLF. Positions 143–182 form a coiled coil; that stretch reads KNEQHAIANTLSVFDERLENLASLIEINRKLRDEYAHKLF. A TRD2 region spans residues 183–330; sequence SLDEAFLSHW…GEIKVPYVKS (148 aa). The conserved region 2 stretch occupies residues 331–370; sequence FQLQRKAGKIVFLLDQKLDQYKKELSSLTVIRDTLLKKLF. A coiled-coil region spans residues 331–370; it reads FQLQRKAGKIVFLLDQKLDQYKKELSSLTVIRDTLLKKLF.

The protein belongs to the type-I restriction system S methylase family.

Functionally, the specificity (S) subunit of a type I restriction enzyme; this subunit dictates DNA sequence specificity. This bacterium does not encode the associated endonuclease or methylase subunits. This chain is Putative type I specificity subunit S.MgeORF438P, found in Mycoplasma genitalium (strain ATCC 33530 / DSM 19775 / NCTC 10195 / G37) (Mycoplasmoides genitalium).